The chain runs to 120 residues: Large ribosomal subunit protein uL18 (120 aa).

Belongs to the universal ribosomal protein uL18 family. Part of the 50S ribosomal subunit; part of the 5S rRNA/L5/L18/L25 subcomplex. Contacts the 5S and 23S rRNAs.

Its function is as follows. This is one of the proteins that bind and probably mediate the attachment of the 5S RNA into the large ribosomal subunit, where it forms part of the central protuberance. This Nitrobacter winogradskyi (strain ATCC 25391 / DSM 10237 / CIP 104748 / NCIMB 11846 / Nb-255) protein is Large ribosomal subunit protein uL18.